The sequence spans 415 residues: Multifunctional CCA protein (415 aa).

ATP contacts are provided by glycine 8 and arginine 11. CTP is bound by residues glycine 8 and arginine 11. 2 residues coordinate Mg(2+): glutamate 21 and aspartate 23. Arginine 91, arginine 137, and arginine 140 together coordinate ATP. The CTP site is built by arginine 91, arginine 137, and arginine 140. The 102-residue stretch at 228-329 (AGTHTLMALD…VELFEGLDLF (102 aa)) folds into the HD domain.

The protein belongs to the tRNA nucleotidyltransferase/poly(A) polymerase family. Bacterial CCA-adding enzyme type 1 subfamily. Monomer. Can also form homodimers and oligomers. Mg(2+) is required as a cofactor. Requires Ni(2+) as cofactor.

It catalyses the reaction a tRNA precursor + 2 CTP + ATP = a tRNA with a 3' CCA end + 3 diphosphate. It carries out the reaction a tRNA with a 3' CCA end + 2 CTP + ATP = a tRNA with a 3' CCACCA end + 3 diphosphate. Its function is as follows. Catalyzes the addition and repair of the essential 3'-terminal CCA sequence in tRNAs without using a nucleic acid template. Adds these three nucleotides in the order of C, C, and A to the tRNA nucleotide-73, using CTP and ATP as substrates and producing inorganic pyrophosphate. tRNA 3'-terminal CCA addition is required both for tRNA processing and repair. Also involved in tRNA surveillance by mediating tandem CCA addition to generate a CCACCA at the 3' terminus of unstable tRNAs. While stable tRNAs receive only 3'-terminal CCA, unstable tRNAs are marked with CCACCA and rapidly degraded. This Halorhodospira halophila (strain DSM 244 / SL1) (Ectothiorhodospira halophila (strain DSM 244 / SL1)) protein is Multifunctional CCA protein.